A 180-amino-acid chain; its full sequence is MIIYLHGFDSNSPGNHEKVLQLQFIDPDVRLVSYSTRHPKHDMQHLLKEVDKMLQLNVDERPLICGVGLGGYWAERIGFLCDIRQVVFNPNLFPYENMEGKIDRPEEYADIATKCVTNFREKNRDRCLVILSRHDEALDSQRSAQALHPFYEIVWDEEQTHKFKNISPHLQRIKAFKTLG.

Belongs to the UPF0227 family.

This Salmonella agona (strain SL483) protein is UPF0227 protein YcfP.